Here is a 533-residue protein sequence, read N- to C-terminus: Calcium uptake protein 1 homolog, mitochondrial (533 aa).

The N-terminal 13 residues, 1-13 (MLRHNFRSSIFIR), are a transit peptide targeting the mitochondrion. Residues 127-147 (PFRPEASQKEESTDSGTEIEV) are disordered. EF-hand domains follow at residues 270-305 (TSHA…IMSQ), 337-358 (KDGK…LQHD), and 465-500 (LSDH…RMRR). 4 residues coordinate Ca(2+): Asp-283, Asp-285, Asn-287, and Glu-294.

Belongs to the MICU1 family. MICU1 subfamily.

It is found in the mitochondrion intermembrane space. Its subcellular location is the mitochondrion inner membrane. Its function is as follows. Calcium sensor of the mitochondrial calcium uniporter (mcu-1) channel, which senses calcium level via its EF-hand domains. At low calcium levels, micu-1 occludes the pore of the mcu-1 channel, preventing mitochondrial calcium uptake. At higher calcium levels, calcium-binding to micu-1 induces a conformational change that weakens mcu-1-micu-1 interactions and moves micu-1 away from the pore, allowing calcium permeation through the mcu-1 channel. Also required to protect against manganese toxicity by preventing manganese uptake by mcu-1. Modulates the activity of the mitochondrial calcium uniporter protein mcu-1 depending on the level of intracellular calcium in PLM touch receptor neurons following axonal injury. The chain is Calcium uptake protein 1 homolog, mitochondrial from Caenorhabditis briggsae.